The following is a 145-amino-acid chain: Protein BUD31 homolog 3 (145 aa).

It belongs to the BUD31 (G10) family.

The protein localises to the nucleus. In Oryza sativa subsp. japonica (Rice), this protein is Protein BUD31 homolog 3.